The primary structure comprises 129 residues: Small ribosomal subunit protein uS8 (129 aa).

The protein belongs to the universal ribosomal protein uS8 family. As to quaternary structure, part of the 30S ribosomal subunit. Contacts proteins S5 and S12.

Its function is as follows. One of the primary rRNA binding proteins, it binds directly to 16S rRNA central domain where it helps coordinate assembly of the platform of the 30S subunit. The sequence is that of Small ribosomal subunit protein uS8 from Legionella pneumophila (strain Corby).